A 230-amino-acid chain; its full sequence is 3-dehydroquinate dehydratase (230 aa).

3-dehydroquinate is bound by residues S26, 51 to 53, and R84; that span reads EIR. H127 serves as the catalytic Proton donor/acceptor. The Schiff-base intermediate with substrate role is filled by K150. Residues R190, T209, and Q213 each contribute to the 3-dehydroquinate site.

It belongs to the type-I 3-dehydroquinase family. In terms of assembly, homodimer.

It carries out the reaction 3-dehydroquinate = 3-dehydroshikimate + H2O. Its pathway is metabolic intermediate biosynthesis; chorismate biosynthesis; chorismate from D-erythrose 4-phosphate and phosphoenolpyruvate: step 3/7. Its function is as follows. Involved in the third step of the chorismate pathway, which leads to the biosynthesis of aromatic amino acids. Catalyzes the cis-dehydration of 3-dehydroquinate (DHQ) and introduces the first double bond of the aromatic ring to yield 3-dehydroshikimate. The polypeptide is 3-dehydroquinate dehydratase (Thermoplasma volcanium (strain ATCC 51530 / DSM 4299 / JCM 9571 / NBRC 15438 / GSS1)).